We begin with the raw amino-acid sequence, 55 residues long: Large ribosomal subunit protein bL33 (55 aa).

The protein belongs to the bacterial ribosomal protein bL33 family.

In Azoarcus sp. (strain BH72), this protein is Large ribosomal subunit protein bL33.